A 268-amino-acid chain; its full sequence is MTPLNIAVAGSTGRMGRAIMETIAEADDLRLSAALEQPGNPYLSQDAGSLTGTPPGVAISSDYVSALAGSDILVDFTRPAGTLSHLATCRKLGVRMVIGTTGFSPEEKDIIRNAAQDIAIVLAPNMSVGVNLLFRLLEVAAKALPEGYDVEIIEAHHRHKVDAPSGTALRMGEVIAQAQSRDLEKVAIYGREGNTGERRADTIGFSTIRGGDIVGDHTALFAGIGERLEITHKASSRKTFAAGALHAARFLMTRKSGLFDMQDVLGLR.

NAD(+)-binding positions include 10–15 (GSTGRM), glutamate 36, 99–101 (GTT), and 123–126 (APNM). Histidine 156 acts as the Proton donor/acceptor in catalysis. Histidine 157 is a (S)-2,3,4,5-tetrahydrodipicolinate binding site. Catalysis depends on lysine 160, which acts as the Proton donor. 166–167 (GT) lines the (S)-2,3,4,5-tetrahydrodipicolinate pocket.

Belongs to the DapB family.

It localises to the cytoplasm. It carries out the reaction (S)-2,3,4,5-tetrahydrodipicolinate + NAD(+) + H2O = (2S,4S)-4-hydroxy-2,3,4,5-tetrahydrodipicolinate + NADH + H(+). The enzyme catalyses (S)-2,3,4,5-tetrahydrodipicolinate + NADP(+) + H2O = (2S,4S)-4-hydroxy-2,3,4,5-tetrahydrodipicolinate + NADPH + H(+). The protein operates within amino-acid biosynthesis; L-lysine biosynthesis via DAP pathway; (S)-tetrahydrodipicolinate from L-aspartate: step 4/4. Catalyzes the conversion of 4-hydroxy-tetrahydrodipicolinate (HTPA) to tetrahydrodipicolinate. This Nitrosomonas europaea (strain ATCC 19718 / CIP 103999 / KCTC 2705 / NBRC 14298) protein is 4-hydroxy-tetrahydrodipicolinate reductase.